A 406-amino-acid chain; its full sequence is Argininosuccinate synthase (406 aa).

ATP-binding positions include 10-18 and Ala-37; that span reads AYSGGLDTS. Positions 88 and 93 each coordinate L-citrulline. Gly-118 is a binding site for ATP. L-aspartate contacts are provided by Thr-120, Asn-124, and Asp-125. Asn-124 lines the L-citrulline pocket. Residues Arg-128, Ser-179, Ser-188, Glu-264, and Tyr-276 each contribute to the L-citrulline site.

This sequence belongs to the argininosuccinate synthase family. Type 1 subfamily. Homotetramer.

It is found in the cytoplasm. It catalyses the reaction L-citrulline + L-aspartate + ATP = 2-(N(omega)-L-arginino)succinate + AMP + diphosphate + H(+). The protein operates within amino-acid biosynthesis; L-arginine biosynthesis; L-arginine from L-ornithine and carbamoyl phosphate: step 2/3. This Dinoroseobacter shibae (strain DSM 16493 / NCIMB 14021 / DFL 12) protein is Argininosuccinate synthase.